We begin with the raw amino-acid sequence, 277 residues long: Coiled-coil domain-containing protein 117 (277 aa).

The tract at residues 1–69 (MAALGRPFSG…GRVSIHCRKK (69 aa)) is disordered. Low complexity predominate over residues 26-37 (FAGRAFPPGAAG). Arg-47 carries the omega-N-methylarginine modification. Phosphoserine is present on Ser-52. The span at 58-69 (ARGRVSIHCRKK) shows a compositional bias: basic residues. Residues 139-166 (QCEVARRRLQEIEDRIIDEDEEVESDRN) are a coiled coil. The tract at residues 212–277 (LPELLPEKPK…ATSTEEEMEL (66 aa)) is disordered.

As to quaternary structure, interacts with CIAO2B; the interaction is direct. Interacts with MMS19; the interaction is indirect.

It localises to the cytoplasm. Its subcellular location is the cytoskeleton. The protein localises to the spindle. It is found in the nucleus. Functionally, facilitates DNA repair, cell cycle progression, and cell proliferation through its interaction with CIAO2B. This Mus musculus (Mouse) protein is Coiled-coil domain-containing protein 117.